The sequence spans 512 residues: Secreted triacylglycerol lipase LIP5 (512 aa).

The N-terminal stretch at methionine 1–alanine 17 is a signal peptide. Cysteines 118 and 292 form a disulfide. The active-site Nucleophile is the serine 203. Asparagine 316 carries N-linked (GlcNAc...) asparagine glycosylation. Aspartate 352 is an active-site residue. Residue asparagine 361 is glycosylated (N-linked (GlcNAc...) asparagine). The active site involves histidine 386. A glycan (N-linked (GlcNAc...) asparagine) is linked at asparagine 453. A disordered region spans residues lysine 480 to histidine 512. Over residues glycine 488–lysine 497 the composition is skewed to basic and acidic residues. Basic residues predominate over residues alanine 498–histidine 512.

It belongs to the AB hydrolase superfamily. Lipase family. Class Lip subfamily.

The protein resides in the secreted. It carries out the reaction a triacylglycerol + H2O = a diacylglycerol + a fatty acid + H(+). It catalyses the reaction a monoacylglycerol + H2O = glycerol + a fatty acid + H(+). The enzyme catalyses a diacylglycerol + H2O = a monoacylglycerol + a fatty acid + H(+). Functionally, secreted lipase that hydrolyzes acylglycerol lipids such as triacylglycerols and consequently releases free fatty acid. Can hydrolyze 4-nitrophenyl palmitate to release 4-nitrophenol and palmitoic acid. Due to an absence of fatty acid synthase genes in Malassezia species, secretory lipases are essential for the yeast to generate free fatty acids from degradation of sebum and assimilate them as lipid sources for growth. Plays an essential role at the pathogen-host interface during disease progression. This Malassezia restricta (strain ATCC 96810 / NBRC 103918 / CBS 7877) (Seborrheic dermatitis infection agent) protein is Secreted triacylglycerol lipase LIP5.